The following is a 422-amino-acid chain: Ribosomal RNA small subunit methyltransferase B (422 aa).

S-adenosyl-L-methionine-binding positions include 254-260, Asp-277, Asp-303, and Asp-322; that span reads CAAPGGK. The Nucleophile role is filled by Cys-375.

This sequence belongs to the class I-like SAM-binding methyltransferase superfamily. RsmB/NOP family.

The protein resides in the cytoplasm. The enzyme catalyses cytidine(967) in 16S rRNA + S-adenosyl-L-methionine = 5-methylcytidine(967) in 16S rRNA + S-adenosyl-L-homocysteine + H(+). In terms of biological role, specifically methylates the cytosine at position 967 (m5C967) of 16S rRNA. The protein is Ribosomal RNA small subunit methyltransferase B of Proteus mirabilis (strain HI4320).